A 359-amino-acid chain; its full sequence is ELAV-like protein 2 (359 aa).

A disordered region spans residues 1–39 (METQLSNGPTCNNTANGPTTVNNNCSSPVDSGNTEDSKT). 2 RRM domains span residues 39-117 (TNLI…YARP) and 125-205 (ANLY…FANN). Ser221 carries the phosphoserine modification. Residues 276 to 354 (WCIFVYNLAP…RVLQVSFKTN (79 aa)) form the RRM 3 domain.

It belongs to the RRM elav family. Interacts with IGF2BP1. Interacts with MAP1B light chain LC1.

RNA-binding protein that binds to the 3' untranslated region (3'UTR) of target mRNAs. Seems to recognize a GAAA motif. Can bind to its own 3'UTR, the FOS 3'UTR and the ID 3'UTR. The polypeptide is ELAV-like protein 2 (Elavl2) (Rattus norvegicus (Rat)).